The chain runs to 351 residues: Transcription factor Atoh1 (351 aa).

Disordered regions lie at residues 16–39 (LGDH…PATL) and 89–116 (EAAA…SKSP). A compositionally biased stretch (pro residues) spans 26–36 (HHVPPLTPQPP). In terms of domain architecture, bHLH spans 156–208 (QRRLAANARERRRMHGLNHAFDQLRNVIPSFNNDKKLSKYETLQMAQIYINAL). Disordered regions lie at residues 244-278 (GAGA…GPAS) and 308-351 (LSPS…DEAS). The span at 247–256 (ASAVAGAQPA) shows a compositional bias: low complexity. The span at 258–268 (GGGPRPTPPGP) shows a compositional bias: pro residues. Basic and acidic residues predominate over residues 332–351 (HRSDGEFSPHSHYSDSDEAS).

Efficient DNA binding requires dimerization with another bHLH protein. In terms of tissue distribution, developing nervous system, and in adult epithelial cells of the gastrointestinal tract.

It localises to the nucleus. In terms of biological role, transcriptional regulator. Activates E box-dependent transcription in collaboration with TCF3/E47, but the activity is completely antagonized by the negative regulator of neurogenesis HES1. Plays a role in the differentiation of subsets of neural cells by activating E box-dependent transcription. This chain is Transcription factor Atoh1, found in Mus musculus (Mouse).